The primary structure comprises 202 residues: ER membrane protein complex subunit 7 homolog (202 aa).

The first 23 residues, 1–23 (MAPIFRSTSLIAFSLFFFFFAST), serve as a signal peptide directing secretion. A helical membrane pass occupies residues 148 to 168 (IVKSPMGLMVGFMVVVVFLMP). Positions 179-202 (MKSAQEQMRSQGVPSLTSLLPASR) are disordered. The span at 182–202 (AQEQMRSQGVPSLTSLLPASR) shows a compositional bias: polar residues.

The protein belongs to the EMC7 family.

Its subcellular location is the membrane. The protein is ER membrane protein complex subunit 7 homolog of Arabidopsis thaliana (Mouse-ear cress).